Here is a 302-residue protein sequence, read N- to C-terminus: Methionyl-tRNA formyltransferase (302 aa).

(6S)-5,6,7,8-tetrahydrofolate is bound at residue 103–106 (SLLP).

The protein belongs to the Fmt family.

The catalysed reaction is L-methionyl-tRNA(fMet) + (6R)-10-formyltetrahydrofolate = N-formyl-L-methionyl-tRNA(fMet) + (6S)-5,6,7,8-tetrahydrofolate + H(+). Its function is as follows. Attaches a formyl group to the free amino group of methionyl-tRNA(fMet). The formyl group appears to play a dual role in the initiator identity of N-formylmethionyl-tRNA by promoting its recognition by IF2 and preventing the misappropriation of this tRNA by the elongation apparatus. The chain is Methionyl-tRNA formyltransferase from Pseudothermotoga lettingae (strain ATCC BAA-301 / DSM 14385 / NBRC 107922 / TMO) (Thermotoga lettingae).